A 69-amino-acid chain; its full sequence is MSAFENFGVRQDVTDVTRLECGICWTVYDPADGDDVAQIAPGTPFAALPEEWHCPNCDAPKSKFMAIES.

Residues 16-67 form the Rubredoxin-like domain; it reads VTRLECGICWTVYDPADGDDVAQIAPGTPFAALPEEWHCPNCDAPKSKFMAI. 4 residues coordinate Fe cation: C21, C24, C54, and C57.

It belongs to the rubredoxin family. Requires Fe(3+) as cofactor.

Could be an electron transport intermediate in hydrogen oxidation. The chain is Probable rubredoxin HupI (hupI) from Bradyrhizobium diazoefficiens (strain JCM 10833 / BCRC 13528 / IAM 13628 / NBRC 14792 / USDA 110).